The following is an 852-amino-acid chain: DNA mismatch repair protein MutS (852 aa).

602–609 (GPNMSGKS) is an ATP binding site.

This sequence belongs to the DNA mismatch repair MutS family.

This protein is involved in the repair of mismatches in DNA. It is possible that it carries out the mismatch recognition step. This protein has a weak ATPase activity. In Streptococcus thermophilus (strain CNRZ 1066), this protein is DNA mismatch repair protein MutS.